The following is a 176-amino-acid chain: Nuclear transcription factor Y subunit B-10 (176 aa).

Over residues 1–15 (MAESQTGGGGGGSHE) the composition is skewed to gly residues. The segment at 1 to 29 (MAESQTGGGGGGSHESGGDQSPRSLNVRE) is disordered. Ala-2 is modified (N-acetylalanine). A DNA-binding region spans residues 34 to 40 (LPIANIS). Positions 61 to 72 (MQECVSEFISFV) are subunit association domain (SAD). The interval 121 to 176 (GDTKGSGKGGESSAKRDGQPSQVSQFSQVPQQGSFSQGPYGNSQGSNMMVQMPGTE) is disordered. Positions 139-159 (QPSQVSQFSQVPQQGSFSQGP) are enriched in low complexity. Over residues 160–169 (YGNSQGSNMM) the composition is skewed to polar residues.

Belongs to the NFYB/HAP3 subunit family. In terms of assembly, heterotrimeric transcription factor composed of three components, NF-YA, NF-YB and NF-YC. NF-YB and NF-YC must interact and dimerize for NF-YA association and DNA binding. In terms of tissue distribution, expressed in the whole plant, except roots.

It localises to the nucleus. Its function is as follows. Component of the NF-Y/HAP transcription factor complex. The NF-Y complex stimulates the transcription of various genes by recognizing and binding to a CCAAT motif in promoters. The polypeptide is Nuclear transcription factor Y subunit B-10 (NFYB10) (Arabidopsis thaliana (Mouse-ear cress)).